The chain runs to 139 residues: Superoxide dismutase [Cu-Zn] (139 aa).

Residue Cys6 is the site of S-palmitoyl cysteine attachment. Cu cation is bound by residues His47 and His49. Zn(2+) contacts are provided by His72, His81, and Asp84. Cu cation is bound at residue His114. The segment covering 118–129 has biased composition (basic and acidic residues); sequence DDLGKGGNDESL. The disordered stretch occupies residues 118-139; sequence DDLGKGGNDESLKTGNAGGRMA.

The protein belongs to the Cu-Zn superoxide dismutase family. As to quaternary structure, homodimer. The cofactor is Cu cation. Requires Zn(2+) as cofactor.

It is found in the cytoplasm. Its subcellular location is the nucleus. It carries out the reaction 2 superoxide + 2 H(+) = H2O2 + O2. Functionally, destroys radicals which are normally produced within the cells and which are toxic to biological systems. The polypeptide is Superoxide dismutase [Cu-Zn] (sod1) (Lampanyctus crocodilus (Jewel lanternfish)).